The primary structure comprises 319 residues: Zinc finger protein C19B12.07c (319 aa).

The segment at 146–170 adopts a C2H2-type zinc-finger fold; it reads FRCLCCHVPCKNKKLLREHMNNKRH.

This sequence belongs to the ZNF277 family.

It is found in the nucleus. In Schizosaccharomyces pombe (strain 972 / ATCC 24843) (Fission yeast), this protein is Zinc finger protein C19B12.07c.